The chain runs to 146 residues: Transcription antitermination protein NusB (146 aa).

The protein belongs to the NusB family.

Functionally, involved in transcription antitermination. Required for transcription of ribosomal RNA (rRNA) genes. Binds specifically to the boxA antiterminator sequence of the ribosomal RNA (rrn) operons. This is Transcription antitermination protein NusB from Solibacter usitatus (strain Ellin6076).